Reading from the N-terminus, the 344-residue chain is tRNA N6-adenosine threonylcarbamoyltransferase (344 aa).

The Fe cation site is built by histidine 113 and histidine 117. Substrate is bound by residues 135–139 (LVSGG), aspartate 169, glycine 182, aspartate 186, and asparagine 278. Aspartate 306 is a Fe cation binding site. A disordered region spans residues 325-344 (ESPISVGTDPSLSVETPQVF). The segment covering 326-344 (SPISVGTDPSLSVETPQVF) has biased composition (polar residues).

Belongs to the KAE1 / TsaD family. Requires Fe(2+) as cofactor.

The protein localises to the cytoplasm. It carries out the reaction L-threonylcarbamoyladenylate + adenosine(37) in tRNA = N(6)-L-threonylcarbamoyladenosine(37) in tRNA + AMP + H(+). Required for the formation of a threonylcarbamoyl group on adenosine at position 37 (t(6)A37) in tRNAs that read codons beginning with adenine. Is involved in the transfer of the threonylcarbamoyl moiety of threonylcarbamoyl-AMP (TC-AMP) to the N6 group of A37, together with TsaE and TsaB. TsaD likely plays a direct catalytic role in this reaction. In Corynebacterium glutamicum (strain ATCC 13032 / DSM 20300 / JCM 1318 / BCRC 11384 / CCUG 27702 / LMG 3730 / NBRC 12168 / NCIMB 10025 / NRRL B-2784 / 534), this protein is tRNA N6-adenosine threonylcarbamoyltransferase.